The following is a 921-amino-acid chain: Inner nuclear membrane protein Man1 (921 aa).

In terms of domain architecture, LEM spans 7-51 (AAAPQQLSDEELFSQLRRYGLSPGPVTESTRPVYLKKLKKLREEE). Ser28 bears the Phosphoserine mark. Disordered stretches follow at residues 47 to 97 (LREE…AYLR), 136 to 357 (SSDE…GGCG), and 374 to 395 (LAPL…PTGP). Composition is skewed to low complexity over residues 53-62 (QQQQQQQQQQ) and 72-85 (TRNS…TAMG). Ser136, Ser137, and Ser140 each carry phosphoserine. A compositionally biased stretch (acidic residues) spans 217–237 (AAEDADEELADGEDRDPEAEE). Residues Ser261, Ser263, and Ser287 each carry the phosphoserine modification. Acidic residues predominate over residues 263-275 (SEEEEEEGEEDGD). Residues 308-317 (SGGSRQETSV) are compositionally biased toward polar residues. The span at 348 to 357 (PGGGGGGGCG) shows a compositional bias: gly residues. Ser412 carries the post-translational modification Phosphoserine. Transmembrane regions (helical) follow at residues 486–506 (MFLL…YLGM) and 637–657 (AFIT…LVCV). Residues 709–921 (VRDSLIQPQD…TGLANSQGSS (213 aa)) are interaction with SMAD1, SMAD2, SMAD3 and SMAD5. The DNA-binding element occupies 717-736 (QDRKKMKKVWDRAVDFLAAN). Ser787 bears the Phosphoserine mark. Position 893 is a phosphothreonine (Thr893). Ser921 is subject to Phosphoserine.

Interacts with SMAD1, SMAD2, SMAD3 and SMAD5. Binds to both phosphorylated and unphosphorylated R-SMADS.

Its subcellular location is the nucleus inner membrane. Its function is as follows. Can function as a specific repressor of TGF-beta, activin, and BMP signaling through its interaction with the R-SMAD proteins. Antagonizes TGF-beta-induced cell proliferation arrest. This is Inner nuclear membrane protein Man1 (Lemd3) from Mus musculus (Mouse).